Consider the following 148-residue polypeptide: Probable glucosamine 6-phosphate N-acetyltransferase (148 aa).

The 146-residue stretch at Ile-3 to Lys-148 folds into the N-acetyltransferase domain. Substrate-binding positions include Thr-25, Lys-72–His-75, and Glu-84–Val-86. Acetyl-CoA contacts are provided by residues Val-86–Val-88 and Leu-94–Lys-99. Residues Tyr-115–Lys-116 and Asp-120 each bind substrate. Tyr-129 to Lys-131 contacts acetyl-CoA. Glu-138 is a binding site for substrate.

The protein belongs to the acetyltransferase family. GNA1 subfamily.

It catalyses the reaction D-glucosamine 6-phosphate + acetyl-CoA = N-acetyl-D-glucosamine 6-phosphate + CoA + H(+). It functions in the pathway nucleotide-sugar biosynthesis; UDP-N-acetyl-alpha-D-glucosamine biosynthesis; N-acetyl-alpha-D-glucosamine 1-phosphate from alpha-D-glucosamine 6-phosphate (route I): step 1/2. The chain is Probable glucosamine 6-phosphate N-acetyltransferase from Acanthamoeba polyphaga (Amoeba).